The primary structure comprises 116 residues: Large ribosomal subunit protein eL18 (116 aa).

Belongs to the eukaryotic ribosomal protein eL18 family. As to quaternary structure, part of the 50S ribosomal subunit. Interacts weakly with proteins L4 and L15. Has been cross-linked to L4.

Functionally, stabilizes the tertiary rRNA structure within the 23S rRNA domain (domain II) to which it binds. The polypeptide is Large ribosomal subunit protein eL18 (rpl18e) (Haloarcula marismortui (strain ATCC 43049 / DSM 3752 / JCM 8966 / VKM B-1809) (Halobacterium marismortui)).